An 83-amino-acid polypeptide reads, in one-letter code: Conotoxin VnMKLT1-022 (83 aa).

The signal sequence occupies residues 1-22; it reads MKLMCMMIVAVLFLTAWTFVTA. Positions 23–55 are excised as a propeptide; the sequence is DDSINGPENRRIWEKLLSKTRDEMKNPEASKLN. Disulfide bonds link Cys-59–Cys-74, Cys-66–Cys-78, and Cys-73–Cys-82.

It belongs to the conotoxin O1 superfamily. In terms of tissue distribution, expressed by the venom duct.

It localises to the secreted. This Conus ventricosus (Mediterranean cone) protein is Conotoxin VnMKLT1-022.